The following is a 129-amino-acid chain: Ribosome-binding factor A (129 aa).

It belongs to the RbfA family. In terms of assembly, monomer. Binds 30S ribosomal subunits, but not 50S ribosomal subunits or 70S ribosomes.

It is found in the cytoplasm. Functionally, one of several proteins that assist in the late maturation steps of the functional core of the 30S ribosomal subunit. Associates with free 30S ribosomal subunits (but not with 30S subunits that are part of 70S ribosomes or polysomes). Required for efficient processing of 16S rRNA. May interact with the 5'-terminal helix region of 16S rRNA. This is Ribosome-binding factor A from Gloeobacter violaceus (strain ATCC 29082 / PCC 7421).